Here is a 348-residue protein sequence, read N- to C-terminus: Lipoyl synthase (348 aa).

The disordered stretch occupies residues 1-45 (MSESAKPRITSGSKFRNEHGFSAIKDGVKRSSSNTEGKSLERKPK). [4Fe-4S] cluster-binding residues include Cys-73, Cys-78, Cys-84, Cys-99, Cys-103, Cys-106, and Ser-314. The region spanning 85 to 303 (WTNGTATIMV…RDIGLEKGFM (219 aa)) is the Radical SAM core domain.

This sequence belongs to the radical SAM superfamily. Lipoyl synthase family. It depends on [4Fe-4S] cluster as a cofactor.

The protein resides in the cytoplasm. The enzyme catalyses [[Fe-S] cluster scaffold protein carrying a second [4Fe-4S](2+) cluster] + N(6)-octanoyl-L-lysyl-[protein] + 2 oxidized [2Fe-2S]-[ferredoxin] + 2 S-adenosyl-L-methionine + 4 H(+) = [[Fe-S] cluster scaffold protein] + N(6)-[(R)-dihydrolipoyl]-L-lysyl-[protein] + 4 Fe(3+) + 2 hydrogen sulfide + 2 5'-deoxyadenosine + 2 L-methionine + 2 reduced [2Fe-2S]-[ferredoxin]. It functions in the pathway protein modification; protein lipoylation via endogenous pathway; protein N(6)-(lipoyl)lysine from octanoyl-[acyl-carrier-protein]: step 2/2. Functionally, catalyzes the radical-mediated insertion of two sulfur atoms into the C-6 and C-8 positions of the octanoyl moiety bound to the lipoyl domains of lipoate-dependent enzymes, thereby converting the octanoylated domains into lipoylated derivatives. The sequence is that of Lipoyl synthase from Marinobacter nauticus (strain ATCC 700491 / DSM 11845 / VT8) (Marinobacter aquaeolei).